The chain runs to 223 residues: Ribose-5-phosphate isomerase A (223 aa).

Residues 29–32 (TGST), 82–85 (DGAD), and 95–98 (KGGG) each bind substrate. The active-site Proton acceptor is the Glu104. Residue Lys122 coordinates substrate.

Belongs to the ribose 5-phosphate isomerase family. As to quaternary structure, homodimer.

The enzyme catalyses aldehydo-D-ribose 5-phosphate = D-ribulose 5-phosphate. It participates in carbohydrate degradation; pentose phosphate pathway; D-ribose 5-phosphate from D-ribulose 5-phosphate (non-oxidative stage): step 1/1. Functionally, catalyzes the reversible conversion of ribose-5-phosphate to ribulose 5-phosphate. This Neisseria meningitidis serogroup B (strain ATCC BAA-335 / MC58) protein is Ribose-5-phosphate isomerase A.